Reading from the N-terminus, the 416-residue chain is Adipocyte plasma membrane-associated protein (416 aa).

The Cytoplasmic segment spans residues Met-1–Arg-39. A helical transmembrane segment spans residues Val-40–Leu-60. The Extracellular segment spans residues Glu-61–Asp-412. Asn-160 carries N-linked (GlcNAc...) asparagine glycosylation.

It belongs to the strictosidine synthase family.

It is found in the membrane. This Salmo salar (Atlantic salmon) protein is Adipocyte plasma membrane-associated protein (apmap).